We begin with the raw amino-acid sequence, 266 residues long: Phosphonates import ATP-binding protein PhnC (266 aa).

The ABC transporter domain occupies Ile-2–Ile-246. Gly-35–Ser-42 provides a ligand contact to ATP.

This sequence belongs to the ABC transporter superfamily. Phosphonates importer (TC 3.A.1.9.1) family. As to quaternary structure, the complex is composed of two ATP-binding proteins (PhnC), two transmembrane proteins (PhnE) and a solute-binding protein (PhnD).

The protein resides in the cell membrane. It carries out the reaction phosphonate(out) + ATP + H2O = phosphonate(in) + ADP + phosphate + H(+). Functionally, part of the ABC transporter complex PhnCDE involved in phosphonates import. Responsible for energy coupling to the transport system. This is Phosphonates import ATP-binding protein PhnC from Shouchella clausii (strain KSM-K16) (Alkalihalobacillus clausii).